Here is a 307-residue protein sequence, read N- to C-terminus: Thioredoxin reductase (307 aa).

Position 36 to 43 (36 to 43) interacts with FAD; the sequence is DNAAPGGK. C138 and C141 form a disulfide bridge. FAD is bound at residue 278–287; it reads DIRIKDIRQI.

This sequence belongs to the class-II pyridine nucleotide-disulfide oxidoreductase family. Homodimer. The cofactor is FAD.

The protein localises to the cytoplasm. It carries out the reaction [thioredoxin]-dithiol + NADP(+) = [thioredoxin]-disulfide + NADPH + H(+). This chain is Thioredoxin reductase (trxB), found in Mycoplasmopsis pulmonis (strain UAB CTIP) (Mycoplasma pulmonis).